A 502-amino-acid polypeptide reads, in one-letter code: Beta-glucosidase 7 (502 aa).

The signal sequence occupies residues 1 to 22; that stretch reads MKPFSQFFVFVVTVSATSYIDA. Residues Gln42, His140, and 185–186 each bind a beta-D-glucoside; that span reads NE. The active-site Proton donor is Glu186. Residue Asn208 is glycosylated (N-linked (GlcNAc...) asparagine). Tyr325 serves as a coordination point for a beta-D-glucoside. N-linked (GlcNAc...) asparagine glycosylation occurs at Asn359. An a beta-D-glucoside-binding site is contributed by Glu392. Glu392 functions as the Nucleophile in the catalytic mechanism. A glycan (N-linked (GlcNAc...) asparagine) is linked at Asn425. A beta-D-glucoside contacts are provided by Trp435 and Tyr451. 2 N-linked (GlcNAc...) asparagine glycosylation sites follow: Asn457 and Asn479.

It belongs to the glycosyl hydrolase 1 family.

The enzyme catalyses Hydrolysis of terminal, non-reducing beta-D-glucosyl residues with release of beta-D-glucose.. The protein is Beta-glucosidase 7 of Arabidopsis thaliana (Mouse-ear cress).